The primary structure comprises 115 residues: Non-specific lipid-transfer protein (115 aa).

Residues 1–24 form the signal peptide; sequence MASSAVIKLALVVALCMAVSVAHA. 4 cysteine pairs are disulfide-bonded: Cys27/Cys74, Cys37/Cys51, Cys52/Cys97, and Cys72/Cys111.

It belongs to the plant LTP family.

In terms of biological role, plant non-specific lipid-transfer proteins transfer phospholipids as well as galactolipids across membranes. May play a role in wax or cutin deposition in the cell walls of expanding epidermal cells and certain secretory tissues. The protein is Non-specific lipid-transfer protein of Pyrus communis (Pear).